A 212-amino-acid polypeptide reads, in one-letter code: Probable nicotinate-nucleotide adenylyltransferase (212 aa).

It belongs to the NadD family.

It carries out the reaction nicotinate beta-D-ribonucleotide + ATP + H(+) = deamido-NAD(+) + diphosphate. It functions in the pathway cofactor biosynthesis; NAD(+) biosynthesis; deamido-NAD(+) from nicotinate D-ribonucleotide: step 1/1. Its function is as follows. Catalyzes the reversible adenylation of nicotinate mononucleotide (NaMN) to nicotinic acid adenine dinucleotide (NaAD). The polypeptide is Probable nicotinate-nucleotide adenylyltransferase (Methylibium petroleiphilum (strain ATCC BAA-1232 / LMG 22953 / PM1)).